The following is a 108-amino-acid chain: Universal stress protein Slr1101 (108 aa).

The protein belongs to the universal stress protein A family.

The chain is Universal stress protein Slr1101 from Synechocystis sp. (strain ATCC 27184 / PCC 6803 / Kazusa).